The primary structure comprises 433 residues: UDP-N-acetylmuramoylalanine--D-glutamate ligase (433 aa).

An ATP-binding site is contributed by 125 to 131; sequence GTSGKTT.

This sequence belongs to the MurCDEF family.

It localises to the cytoplasm. The enzyme catalyses UDP-N-acetyl-alpha-D-muramoyl-L-alanine + D-glutamate + ATP = UDP-N-acetyl-alpha-D-muramoyl-L-alanyl-D-glutamate + ADP + phosphate + H(+). It functions in the pathway cell wall biogenesis; peptidoglycan biosynthesis. Cell wall formation. Catalyzes the addition of glutamate to the nucleotide precursor UDP-N-acetylmuramoyl-L-alanine (UMA). This is UDP-N-acetylmuramoylalanine--D-glutamate ligase from Nitratidesulfovibrio vulgaris (strain ATCC 29579 / DSM 644 / CCUG 34227 / NCIMB 8303 / VKM B-1760 / Hildenborough) (Desulfovibrio vulgaris).